We begin with the raw amino-acid sequence, 276 residues long: 2-dehydro-3-deoxyphosphooctonate aldolase (276 aa).

It belongs to the KdsA family.

The protein resides in the cytoplasm. The catalysed reaction is D-arabinose 5-phosphate + phosphoenolpyruvate + H2O = 3-deoxy-alpha-D-manno-2-octulosonate-8-phosphate + phosphate. Its pathway is carbohydrate biosynthesis; 3-deoxy-D-manno-octulosonate biosynthesis; 3-deoxy-D-manno-octulosonate from D-ribulose 5-phosphate: step 2/3. It participates in bacterial outer membrane biogenesis; lipopolysaccharide biosynthesis. The chain is 2-dehydro-3-deoxyphosphooctonate aldolase from Helicobacter acinonychis (strain Sheeba).